The chain runs to 564 residues: MFGVYFVLLFLSSALIHVANAGSNAEWRKRIIYQILTDRFAVDDGSTDNPCDPDANQYCGGTWKGIENKLDYIEDMGFNAIWISPIDKNIEGDIDGAGYAYHGYWNTDYESLNEHFGTEDDLVSLITAAHKAGIWVMLDSIVNSMALAPPLADADYSSLNPFNKESYFHPYCLIDWDITDNETNVMDCWQDSGVLLADLDVESSDVSSYLSDHFKSLISKYDFDGLRIDAVKMMNYTFFPDFVDATGVYSVGEVFSYDPDTMCSYMSVLPGVTNYFLQLYINFSFTATGAGFTLIPTYQEVMASNCSKYDSTLMLTFIENHDLYRFPYYTSDQSQIMGALSFVLIWDGIPSIFYGQEQGFNGGEDPANRPALWLTDYDQSNPYYTVIKTMVAFRKFVITQDPDWVTSTYQSIESAVDHYVGQKNDVLVMFNNMGVTNNLTIYEVETNYTANEVVSDVFGHRTLTVGADKTLTASMTNGYPLIMYPHSKMSGFTLPTVNRTVMPSTSATATTTVYTSYYSPSYSARSFTGTGSIFTISSSSRLILSFKTLVFGLGVTAMLFVLFF.

Residues 1 to 21 (MFGVYFVLLFLSSALIHVANA) form the signal peptide. A disulfide bond links cysteine 51 and cysteine 59. The substrate site is built by asparagine 56 and tryptophan 105. Position 143 (asparagine 143) interacts with Ca(2+). A disulfide bridge links cysteine 172 with cysteine 188. Asparagine 181 is a glycosylation site (N-linked (GlcNAc...) asparagine). Position 198 (aspartate 198) interacts with Ca(2+). Arginine 227 provides a ligand contact to substrate. Aspartate 229 is a Ca(2+) binding site. Aspartate 229 functions as the Nucleophile in the catalytic mechanism. Position 232–233 (232–233 (KM)) interacts with substrate. Asparagine 235 is a glycosylation site (N-linked (GlcNAc...) asparagine). Glutamate 253 contributes to the Ca(2+) binding site. Glutamate 253 acts as the Proton donor in catalysis. Cysteine 263 and cysteine 306 are oxidised to a cystine. N-linked (GlcNAc...) asparagine glycosylation is found at asparagine 282 and asparagine 305. Residues aspartate 322 and arginine 369 each coordinate substrate. 3 N-linked (GlcNAc...) asparagine glycosylation sites follow: asparagine 438, asparagine 447, and asparagine 498. Serine 538 carries the GPI-anchor amidated serine lipid modification. Positions 539-564 (SSRLILSFKTLVFGLGVTAMLFVLFF) are cleaved as a propeptide — removed in mature form.

Belongs to the glycosyl hydrolase 13 family. The cofactor is Ca(2+). N-glycosylated.

It localises to the cell membrane. The catalysed reaction is Endohydrolysis of (1-&gt;4)-alpha-D-glucosidic linkages in polysaccharides containing three or more (1-&gt;4)-alpha-linked D-glucose units.. Functionally, has a role in cell wall biosynthesis where it is involved in maintaining cell wall strength and shape. In Schizosaccharomyces pombe (strain 972 / ATCC 24843) (Fission yeast), this protein is Alpha-amylase 3 (aah3).